Reading from the N-terminus, the 369-residue chain is Dual-specificity RNA methyltransferase RlmN (369 aa).

Glu96 functions as the Proton acceptor in the catalytic mechanism. The 237-residue stretch at 102-338 folds into the Radical SAM core domain; the sequence is DGERGTLCVS…VTTIRTTRGD (237 aa). Cys109 and Cys344 are oxidised to a cystine. 3 residues coordinate [4Fe-4S] cluster: Cys116, Cys120, and Cys123. S-adenosyl-L-methionine contacts are provided by residues 169-170, Ser201, 223-225, and Asn301; these read GE and SLH. The active-site S-methylcysteine intermediate is Cys344.

It belongs to the radical SAM superfamily. RlmN family. The cofactor is [4Fe-4S] cluster.

The protein resides in the cytoplasm. The enzyme catalyses adenosine(2503) in 23S rRNA + 2 reduced [2Fe-2S]-[ferredoxin] + 2 S-adenosyl-L-methionine = 2-methyladenosine(2503) in 23S rRNA + 5'-deoxyadenosine + L-methionine + 2 oxidized [2Fe-2S]-[ferredoxin] + S-adenosyl-L-homocysteine. It catalyses the reaction adenosine(37) in tRNA + 2 reduced [2Fe-2S]-[ferredoxin] + 2 S-adenosyl-L-methionine = 2-methyladenosine(37) in tRNA + 5'-deoxyadenosine + L-methionine + 2 oxidized [2Fe-2S]-[ferredoxin] + S-adenosyl-L-homocysteine. In terms of biological role, specifically methylates position 2 of adenine 2503 in 23S rRNA and position 2 of adenine 37 in tRNAs. m2A2503 modification seems to play a crucial role in the proofreading step occurring at the peptidyl transferase center and thus would serve to optimize ribosomal fidelity. The protein is Dual-specificity RNA methyltransferase RlmN of Marinobacter nauticus (strain ATCC 700491 / DSM 11845 / VT8) (Marinobacter aquaeolei).